Here is a 190-residue protein sequence, read N- to C-terminus: Peptidyl-tRNA hydrolase (190 aa).

Phe-14 is a tRNA binding site. Catalysis depends on His-19, which acts as the Proton acceptor. 3 residues coordinate tRNA: Met-64, Asn-66, and Asn-112.

This sequence belongs to the PTH family. In terms of assembly, monomer.

It localises to the cytoplasm. It carries out the reaction an N-acyl-L-alpha-aminoacyl-tRNA + H2O = an N-acyl-L-amino acid + a tRNA + H(+). Hydrolyzes ribosome-free peptidyl-tRNAs (with 1 or more amino acids incorporated), which drop off the ribosome during protein synthesis, or as a result of ribosome stalling. Its function is as follows. Catalyzes the release of premature peptidyl moieties from peptidyl-tRNA molecules trapped in stalled 50S ribosomal subunits, and thus maintains levels of free tRNAs and 50S ribosomes. This is Peptidyl-tRNA hydrolase from Staphylococcus epidermidis (strain ATCC 35984 / DSM 28319 / BCRC 17069 / CCUG 31568 / BM 3577 / RP62A).